Reading from the N-terminus, the 897-residue chain is MSHHKRRVYPQAQFGLAQAGQTGYQDVQQPGVLPSQANYQEPVPLVTPIQEVLNNQIDQTADSLHNMQLHNVPDFNQPLQGQLNGPQSPALYQNYNENGMNNYNAAFGNGGTSVKQVNQLYPIDLLSDLPPPIKDLGLPPPPINLSPDIMSVPSDKSNASPDYIRSTLNAVPKTNSLLKKTKLPFALVIKPYQHLNDDVNAPPLNEECLIVRCRRCRSYINPFAKFIEQGRRWRCNFCRLANDLPMQFDQSSIDTNIVNRLDRTEIKNAVMEYVAPKEYTVRPPPPSIYTFIIDVSQNAIKNGLFVSTIETLKQQLEYLPNRDNRTKISIILVDHALHILSIPADDVSNKFRILDVADIDEPYIPLPNSLVVSLSRCKQNVQLALEKIKQLFEINVSTKFALGPALRTAQKLIGGVGGKLIVISASLPNAGIGSLQRRNESGVSGTTKESSQLLSCQDSFYKTFTVECSKTQITIDLFLASDDYVDVATLSNLPRYTAGQTHFYPGYNASNISDFNKFTTEFSKHITMDISFETVMRARGSTGLKTSAFYGHFFNRSSDLCAFSTMPRDQSYVFDISIEDTITTDYCYFQVAVLLSLNNGQRRIRVITLALPTTQSISEVFACVDQQAVAAQITQRAVQKANSSSIDDARDLIQKTTLDILSTYKKELVVTNTGGVVPLKLSTNLRILPLLMHALMKHMAFRAGVVPSDHRAYSLNVLESVPIKSLITSIYPSIYSMHDMGDDCGYTDETGNVILPECINDTAILMEKYGLYLIDNGSELFLWVGGEAVPELLSDVFGVPEMSQVPVGKHDLFRVEGSQFNERVCNIIDQLRTSDDTTVYKTLYIVSGPTINDSFSQGTRELASLRMWAATAFVEDNIMKTLSYREFLEKMKKEVSK.

Zn(2+) is bound by residues cysteine 213, cysteine 216, cysteine 235, and cysteine 238. Positions 213–238 (CRRCRSYINPFAKFIEQGRRWRCNFC) are zinc finger-like.

This sequence belongs to the SEC23/SEC24 family. SEC24 subfamily. The COPII coat is composed of at least 5 proteins: the SEC23/24 complex, the SEC13/31 complex, and the protein SAR1. Golgi apparatus membrane; Peripheral membrane protein; Cytoplasmic side.

The protein resides in the cytoplasm. It is found in the cytoplasmic vesicle. It localises to the COPII-coated vesicle membrane. The protein localises to the endoplasmic reticulum membrane. Its subcellular location is the golgi apparatus membrane. Component of the coat protein complex II (COPII) which promotes the formation of transport vesicles from the endoplasmic reticulum (ER). The coat has two main functions, the physical deformation of the endoplasmic reticulum membrane into vesicles and the selection of cargo molecules. The chain is Protein transport protein SEC24-1 (SEC241) from Candida glabrata (strain ATCC 2001 / BCRC 20586 / JCM 3761 / NBRC 0622 / NRRL Y-65 / CBS 138) (Yeast).